The chain runs to 277 residues: Membrane protein insertase YidC 2 (277 aa).

A signal peptide spans 1-22 (MKKYRKILAMLAVLAIVLVLSG). A lipid anchor (N-palmitoyl cysteine) is attached at C23. Residue C23 is the site of S-diacylglycerol cysteine attachment. 5 consecutive transmembrane segments (helical) span residues 35 to 55 (FWDG…SNLF), 60 to 80 (GLGI…LMIF), 130 to 150 (ASML…QAIW), 170 to 190 (PYYV…WLAM), and 208 to 228 (PVII…YWVI). Basic and acidic residues predominate over residues 251-266 (EAKKQAERDRKRTLEK). A disordered region spans residues 251–277 (EAKKQAERDRKRTLEKARKRAIRNHKR). Basic residues predominate over residues 267–277 (ARKRAIRNHKR).

This sequence belongs to the OXA1/ALB3/YidC family. Type 2 subfamily.

Its subcellular location is the cell membrane. Functionally, required for the insertion and/or proper folding and/or complex formation of integral membrane proteins into the membrane. Involved in integration of membrane proteins that insert both dependently and independently of the Sec translocase complex, as well as at least some lipoproteins. The polypeptide is Membrane protein insertase YidC 2 (Lactiplantibacillus plantarum (strain ATCC BAA-793 / NCIMB 8826 / WCFS1) (Lactobacillus plantarum)).